A 200-amino-acid polypeptide reads, in one-letter code: 3-isopropylmalate dehydratase small subunit (200 aa).

The protein belongs to the LeuD family. LeuD type 1 subfamily. Heterodimer of LeuC and LeuD.

The catalysed reaction is (2R,3S)-3-isopropylmalate = (2S)-2-isopropylmalate. Its pathway is amino-acid biosynthesis; L-leucine biosynthesis; L-leucine from 3-methyl-2-oxobutanoate: step 2/4. Its function is as follows. Catalyzes the isomerization between 2-isopropylmalate and 3-isopropylmalate, via the formation of 2-isopropylmaleate. The polypeptide is 3-isopropylmalate dehydratase small subunit (leuD) (Haemophilus influenzae (strain ATCC 51907 / DSM 11121 / KW20 / Rd)).